The sequence spans 449 residues: Integrator complex subunit 15 (449 aa).

Belongs to the Integrator subunit 15 family. Component of the Integrator complex, composed of core subunits INTS1, INTS2, INTS3, INTS4, INTS5, INTS6, INTS7, INTS8, INTS9/RC74, INTS10, INTS11/CPSF3L, INTS12, INTS13, INTS14 and INTS15. The core complex associates with protein phosphatase 2A subunits PPP2CA and PPP2R1A, to form the Integrator-PP2A (INTAC) complex. INTS15 is part of the tail subcomplex, composed of INTS10, INTS13, INTS14 and INTS15.

The protein resides in the nucleus. The protein localises to the chromosome. Functionally, component of the integrator complex, a multiprotein complex that terminates RNA polymerase II (Pol II) transcription in the promoter-proximal region of genes. The integrator complex provides a quality checkpoint during transcription elongation by driving premature transcription termination of transcripts that are unfavorably configured for transcriptional elongation: the complex terminates transcription by (1) catalyzing dephosphorylation of the C-terminal domain (CTD) of Pol II subunit POLR2A/RPB1 and SUPT5H/SPT5, (2) degrading the exiting nascent RNA transcript via endonuclease activity and (3) promoting the release of Pol II from bound DNA. The integrator complex is also involved in terminating the synthesis of non-coding Pol II transcripts, such as enhancer RNAs (eRNAs), small nuclear RNAs (snRNAs), telomerase RNAs and long non-coding RNAs (lncRNAs). INTS15 is part of the integrator tail module that acts as a platform for the recruitment of transcription factors at promoters. Within the integrator complex, INTS15 is required to bridge different integrator modules. In Homo sapiens (Human), this protein is Integrator complex subunit 15.